The primary structure comprises 699 residues: Conditioned medium factor (699 aa).

Residues 1-18 form the signal peptide; that stretch reads MRLLLLLILIITINFSYG. N-linked (GlcNAc...) asparagine glycosylation is found at N130, N283, N346, and N430. The tract at residues 680–699 is disordered; sequence SPQQTTNTEYNKEMSSNSVW.

Post-translationally, N- and O-glycosylated. The N-terminus is blocked.

Functionally, involved in cell density sensing and might synchronize the onset of development by triggering aggregation when a majority of the cells in a given area have starved. In Dictyostelium discoideum (Social amoeba), this protein is Conditioned medium factor (cmfA).